A 92-amino-acid polypeptide reads, in one-letter code: C-C motif chemokine 3 (92 aa).

Positions 1–23 (MQVSTAALAVLLCTMALCNQFSA) are cleaved as a signal peptide. Disulfide bonds link Cys-33–Cys-57 and Cys-34–Cys-73.

This sequence belongs to the intercrine beta (chemokine CC) family. In terms of assembly, self-associates. Also heterodimer of MIP-1-alpha(4-69) and MIP-1-beta(3-69). Interacts with CCR1.

It is found in the secreted. Monokine with inflammatory and chemokinetic properties. Binds to CCR1, CCR4 and CCR5. One of the major HIV-suppressive factors produced by CD8+ T-cells. Recombinant MIP-1-alpha induces a dose-dependent inhibition of different strains of HIV-1, HIV-2, and simian immunodeficiency virus (SIV). The polypeptide is C-C motif chemokine 3 (CCL3) (Pan troglodytes (Chimpanzee)).